Reading from the N-terminus, the 344-residue chain is Inositol 2-dehydrogenase/D-chiro-inositol 3-dehydrogenase (344 aa).

This sequence belongs to the Gfo/Idh/MocA family. Homotetramer.

The catalysed reaction is myo-inositol + NAD(+) = scyllo-inosose + NADH + H(+). The enzyme catalyses 1D-chiro-inositol + NAD(+) = scyllo-inosine + NADH + H(+). It participates in polyol metabolism; myo-inositol degradation into acetyl-CoA; acetyl-CoA from myo-inositol: step 1/7. Involved in the oxidation of myo-inositol (MI) and D-chiro-inositol (DCI) to 2-keto-myo-inositol (2KMI or 2-inosose) and 1-keto-D-chiro-inositol (1KDCI), respectively. The chain is Inositol 2-dehydrogenase/D-chiro-inositol 3-dehydrogenase from Bacillus licheniformis (strain ATCC 14580 / DSM 13 / JCM 2505 / CCUG 7422 / NBRC 12200 / NCIMB 9375 / NCTC 10341 / NRRL NRS-1264 / Gibson 46).